Reading from the N-terminus, the 487-residue chain is Transmembrane protein 161B (487 aa).

Residue Asn34 is glycosylated (N-linked (GlcNAc...) asparagine). Residues 107–127 (LVDFTVAATVVYLVTEVYYNF) form a helical membrane-spanning segment. Asn135 carries an N-linked (GlcNAc...) asparagine glycan. Transmembrane regions (helical) follow at residues 136–156 (ISLVWCLLVLSFAIKVLFSLT) and 169–189 (SVCVTFGFFFFVKAMAVLIVT). Asn203 carries N-linked (GlcNAc...) asparagine glycosylation. 5 helical membrane-spanning segments follow: residues 228–248 (FKFFLAIFCSFIGAFLTFPGL), 265–285 (ITQTLLHINFLAPLFMVLLWV), 305–325 (LMTEATFDTLRLWLIILLCAL), 367–387 (VFYYLCVIALQYVAPLVMLLH), and 459–479 (LSFLTWWIAACLFSTSLFGLF).

This sequence belongs to the TMEM161 family.

The protein localises to the cell membrane. Essential for maintaining normal cardiac rhythm in the developing heart and for neonatal survival. Inhibits potassium and calcium currents in the cardiomyocytes, this assists in timely action potential repolarization and thereby maintains normal cardiac rhythm. This is Transmembrane protein 161B (TMEM161B) from Homo sapiens (Human).